The following is a 512-amino-acid chain: Cytochrome P450 1A1 (512 aa).

The mitochondrial targeting signal stretch occupies residues 29-40; sequence SRPRVPKGLKNP. An O-linked (GlcNAc) serine glycan is attached at Ser67. Phe224 contributes to the substrate binding site. Residue Cys457 coordinates heme.

Belongs to the cytochrome P450 family. In terms of assembly, interacts with cytosolic chaperones HSP70 and HSP90; this interaction is required for initial targeting to mitochondria. Interacts (via mitochondrial targeting signal) with TOMM40 (via N-terminus); this interaction is required for translocation across the mitochondrial outer membrane. The cofactor is heme.

It localises to the endoplasmic reticulum membrane. Its subcellular location is the mitochondrion inner membrane. The protein localises to the microsome membrane. The protein resides in the cytoplasm. The enzyme catalyses an organic molecule + reduced [NADPH--hemoprotein reductase] + O2 = an alcohol + oxidized [NADPH--hemoprotein reductase] + H2O + H(+). The catalysed reaction is estrone + reduced [NADPH--hemoprotein reductase] + O2 = 2-hydroxyestrone + oxidized [NADPH--hemoprotein reductase] + H2O + H(+). It carries out the reaction estrone + reduced [NADPH--hemoprotein reductase] + O2 = 4-hydroxyestrone + oxidized [NADPH--hemoprotein reductase] + H2O + H(+). It catalyses the reaction estrone + reduced [NADPH--hemoprotein reductase] + O2 = 6alpha-hydroxyestrone + oxidized [NADPH--hemoprotein reductase] + H2O + H(+). The enzyme catalyses estrone + reduced [NADPH--hemoprotein reductase] + O2 = 15alpha-hydroxyestrone + oxidized [NADPH--hemoprotein reductase] + H2O + H(+). The catalysed reaction is estrone + reduced [NADPH--hemoprotein reductase] + O2 = 16alpha-hydroxyestrone + oxidized [NADPH--hemoprotein reductase] + H2O + H(+). It carries out the reaction 17beta-estradiol + reduced [NADPH--hemoprotein reductase] + O2 = 2-hydroxy-17beta-estradiol + oxidized [NADPH--hemoprotein reductase] + H2O + H(+). It catalyses the reaction 17beta-estradiol + reduced [NADPH--hemoprotein reductase] + O2 = 4-hydroxy-17beta-estradiol + oxidized [NADPH--hemoprotein reductase] + H2O + H(+). The enzyme catalyses 17beta-estradiol + reduced [NADPH--hemoprotein reductase] + O2 = 6alpha-hydroxy-17beta-estradiol + oxidized [NADPH--hemoprotein reductase] + H2O + H(+). The catalysed reaction is 17beta-estradiol + reduced [NADPH--hemoprotein reductase] + O2 = 7alpha-hydroxy-17beta-estradiol + oxidized [NADPH--hemoprotein reductase] + H2O + H(+). It carries out the reaction 17beta-estradiol + reduced [NADPH--hemoprotein reductase] + O2 = 15alpha-hydroxy-17beta-estradiol + oxidized [NADPH--hemoprotein reductase] + H2O + H(+). It catalyses the reaction (5Z,8Z,11Z)-eicosatrienoate + reduced [NADPH--hemoprotein reductase] + O2 = 19-hydroxy-(5Z,8Z,11Z)-eicosatrienoate + oxidized [NADPH--hemoprotein reductase] + H2O + H(+). The enzyme catalyses (5Z,8Z,11Z,14Z)-eicosatetraenoate + reduced [NADPH--hemoprotein reductase] + O2 = 16-hydroxy-(5Z,8Z,11Z,14Z)-eicosatetraenoate + oxidized [NADPH--hemoprotein reductase] + H2O + H(+). The catalysed reaction is (5Z,8Z,11Z,14Z)-eicosatetraenoate + reduced [NADPH--hemoprotein reductase] + O2 = 17-hydroxy-(5Z,8Z,11Z,14Z)-eicosatetraenoate + oxidized [NADPH--hemoprotein reductase] + H2O + H(+). It carries out the reaction (5Z,8Z,11Z,14Z)-eicosatetraenoate + reduced [NADPH--hemoprotein reductase] + O2 = 18-hydroxy-(5Z,8Z,11Z,14Z)-eicosatetraenoate + oxidized [NADPH--hemoprotein reductase] + H2O + H(+). It catalyses the reaction (5Z,8Z,11Z,14Z)-eicosatetraenoate + reduced [NADPH--hemoprotein reductase] + O2 = 19-hydroxy-(5Z,8Z,11Z,14Z)-eicosatetraenoate + oxidized [NADPH--hemoprotein reductase] + H2O + H(+). The enzyme catalyses (5Z,8Z,11Z,14Z,17Z)-eicosapentaenoate + reduced [NADPH--hemoprotein reductase] + O2 = 19-hydroxy-(5Z,8Z,11Z,14Z,17Z)-eicosapentaenoate + oxidized [NADPH--hemoprotein reductase] + H2O + H(+). The catalysed reaction is (5Z,8Z,11Z,14Z)-eicosatetraenoate + reduced [NADPH--hemoprotein reductase] + O2 = (8R,9S)-epoxy-(5Z,11Z,14Z)-eicosatrienoate + oxidized [NADPH--hemoprotein reductase] + H2O + H(+). It carries out the reaction (5Z,8Z,11Z,14Z)-eicosatetraenoate + reduced [NADPH--hemoprotein reductase] + O2 = (11R,12S)-epoxy-(5Z,8Z,14Z)-eicosatrienoate + oxidized [NADPH--hemoprotein reductase] + H2O + H(+). It catalyses the reaction (5Z,8Z,11Z,14Z)-eicosatetraenoate + reduced [NADPH--hemoprotein reductase] + O2 = (14S,15R)-epoxy-(5Z,8Z,11Z)-eicosatrienoate + oxidized [NADPH--hemoprotein reductase] + H2O + H(+). The enzyme catalyses (5Z,8Z,11Z,14Z)-eicosatetraenoate + reduced [NADPH--hemoprotein reductase] + O2 = (14R,15S)-epoxy-(5Z,8Z,11Z)-eicosatrienoate + oxidized [NADPH--hemoprotein reductase] + H2O + H(+). The catalysed reaction is (5Z,8Z,11Z,14Z,17Z)-eicosapentaenoate + reduced [NADPH--hemoprotein reductase] + O2 = (17R,18S)-epoxy-(5Z,8Z,11Z,14Z)-eicosatetraenoate + oxidized [NADPH--hemoprotein reductase] + H2O + H(+). It carries out the reaction (4Z,7Z,10Z,13Z,16Z,19Z)-docosahexaenoate + reduced [NADPH--hemoprotein reductase] + O2 = (19S,20R)-epoxy-(4Z,7Z,10Z,13Z,16Z)-docosapentaenoate + oxidized [NADPH--hemoprotein reductase] + H2O + H(+). It catalyses the reaction (4Z,7Z,10Z,13Z,16Z,19Z)-docosahexaenoate + reduced [NADPH--hemoprotein reductase] + O2 = (19R,20S)-epoxy-(4Z,7Z,10Z,13Z,16Z)-docosapentaenoate + oxidized [NADPH--hemoprotein reductase] + H2O + H(+). The enzyme catalyses all-trans-retinol + reduced [NADPH--hemoprotein reductase] + O2 = all-trans-retinal + oxidized [NADPH--hemoprotein reductase] + 2 H2O + H(+). The catalysed reaction is all-trans-retinal + reduced [NADPH--hemoprotein reductase] + O2 = all-trans-retinoate + oxidized [NADPH--hemoprotein reductase] + H2O + 2 H(+). It carries out the reaction (13S)-hydroperoxy-(9Z,11E)-octadecadienoate = 13-oxo-(9Z,11E)-octadecadienoate + H2O. It catalyses the reaction (12S)-hydroperoxy-(5Z,8Z,10E,14Z)-eicosatetraenoate = 12-oxo-(5Z,8Z,10E,14Z)-eicosatetraenoate + H2O. The enzyme catalyses (15S)-hydroperoxy-(5Z,8Z,11Z,13E)-eicosatetraenoate = 15-oxo-(5Z,8Z,11Z,13E)-eicosatetraenoate + H2O. The catalysed reaction is (5S)-hydroperoxy-(6E,8Z,11Z,14Z)-eicosatetraenoate = 5-oxo-(6E,8Z,11Z,14Z)-eicosatetraenoate + H2O. Its pathway is steroid hormone biosynthesis. The protein operates within lipid metabolism; fatty acid metabolism. It functions in the pathway cofactor metabolism; retinol metabolism. Its function is as follows. A cytochrome P450 monooxygenase involved in the metabolism of various endogenous substrates, including fatty acids, steroid hormones and vitamins. Mechanistically, uses molecular oxygen inserting one oxygen atom into a substrate, and reducing the second into a water molecule, with two electrons provided by NADPH via cytochrome P450 reductase (CPR; NADPH-ferrihemoprotein reductase). Catalyzes the hydroxylation of carbon-hydrogen bonds. Exhibits high catalytic activity for the formation of hydroxyestrogens from estrone (E1) and 17beta-estradiol (E2), namely 2-hydroxy E1 and E2, as well as D-ring hydroxylated E1 and E2 at the C15alpha and C16alpha positions. Displays different regioselectivities for polyunsaturated fatty acids (PUFA) hydroxylation. Catalyzes the epoxidation of double bonds of certain PUFA. Converts arachidonic acid toward epoxyeicosatrienoic acid (EET) regioisomers, 8,9-, 11,12-, and 14,15-EET, that function as lipid mediators in the vascular system. Displays an absolute stereoselectivity in the epoxidation of eicosapentaenoic acid (EPA) producing the 17(R),18(S) enantiomer. May play an important role in all-trans retinoic acid biosynthesis in extrahepatic tissues. Catalyzes two successive oxidative transformation of all-trans retinol to all-trans retinal and then to the active form all-trans retinoic acid. May also participate in eicosanoids metabolism by converting hydroperoxide species into oxo metabolites (lipoxygenase-like reaction, NADPH-independent). This is Cytochrome P450 1A1 (CYP1A1) from Macaca fascicularis (Crab-eating macaque).